The following is an 876-amino-acid chain: Alanine--tRNA ligase (876 aa).

Lys-74 carries the post-translational modification N6-acetyllysine. Residues His-564, His-568, Cys-666, and His-670 each contribute to the Zn(2+) site.

Belongs to the class-II aminoacyl-tRNA synthetase family. In terms of assembly, homotetramer. The cofactor is Zn(2+).

It localises to the cytoplasm. The enzyme catalyses tRNA(Ala) + L-alanine + ATP = L-alanyl-tRNA(Ala) + AMP + diphosphate. Its function is as follows. Catalyzes the attachment of alanine to tRNA(Ala) in a two-step reaction: alanine is first activated by ATP to form Ala-AMP and then transferred to the acceptor end of tRNA(Ala). Also edits incorrectly charged Ser-tRNA(Ala) and Gly-tRNA(Ala) via its editing domain. This Escherichia coli O9:H4 (strain HS) protein is Alanine--tRNA ligase.